A 434-amino-acid polypeptide reads, in one-letter code: Glutamyl-tRNA reductase (434 aa).

Substrate is bound by residues 49–52 (TCNR), S109, 114–116 (EPQ), and Q120. C50 functions as the Nucleophile in the catalytic mechanism. 189-194 (GAGEMA) contributes to the NADP(+) binding site.

This sequence belongs to the glutamyl-tRNA reductase family. Homodimer.

It carries out the reaction (S)-4-amino-5-oxopentanoate + tRNA(Glu) + NADP(+) = L-glutamyl-tRNA(Glu) + NADPH + H(+). It participates in porphyrin-containing compound metabolism; protoporphyrin-IX biosynthesis; 5-aminolevulinate from L-glutamyl-tRNA(Glu): step 1/2. Its function is as follows. Catalyzes the NADPH-dependent reduction of glutamyl-tRNA(Glu) to glutamate 1-semialdehyde (GSA). The sequence is that of Glutamyl-tRNA reductase from Desulfatibacillum aliphaticivorans.